The sequence spans 260 residues: MNPNCARCCKIVYPTEKVNCLDKFWHKACFHCETCKMTLNMKNYKGYEKKPYCNAHYPKQSFTMVADTPENLRLKQQSELQSQVRYKEEFEKNKGKGFSVVADTPELQRIKKTQDQISNIKYHEEFEKSRMGPSGGEGLECERRDPQESSYRRPQEQQQPHHIPASTPVYQQPQQQPAAQSYGGYKEPAAPASIQRSAPGGGGKRYRAVYDYSAADEDEVSFQDGDTIVNVQQIDDGWMYGTVERTGDTGMLPANYVEAI.

Methionine 1 is subject to N-acetylmethionine. The LIM zinc-binding domain maps to 5-56 (CARCCKIVYPTEKVNCLDKFWHKACFHCETCKMTLNMKNYKGYEKKPYCNAH). Lysine 42 is subject to N6-acetyllysine. Nebulin repeat units lie at residues 61–95 (SFTM…KNKG) and 97–131 (GFSV…KSRM). Threonine 68 carries the post-translational modification Phosphothreonine. Lysine 75 carries the N6-methyllysine modification. Serine 99 carries the post-translational modification Phosphoserine. A Phosphothreonine modification is found at threonine 104. At lysine 112 the chain carries N6-succinyllysine. Residues serine 118 and serine 134 each carry the phosphoserine modification. A disordered region spans residues 123-204 (HEEFEKSRMG…QRSAPGGGGK (82 aa)). Residues 140–155 (ECERRDPQESSYRRPQ) show a composition bias toward basic and acidic residues. The span at 171–180 (QQPQQQPAAQ) shows a compositional bias: low complexity. One can recognise an SH3 domain in the interval 201–260 (GGGKRYRAVYDYSAADEDEVSFQDGDTIVNVQQIDDGWMYGTVERTGDTGMLPANYVEAI).

In terms of assembly, interacts with F-actin. Interacts with ANKRD54. Interacts with KBTBD10. Phosphorylated.

It localises to the cytoplasm. The protein localises to the cell cortex. It is found in the cytoskeleton. In terms of biological role, plays an important role in the regulation of dynamic actin-based, cytoskeletal activities. Agonist-dependent changes in LASP1 phosphorylation may also serve to regulate actin-associated ion transport activities, not only in the parietal cell but also in certain other F-actin-rich secretory epithelial cell types. The protein is LIM and SH3 domain protein 1 (LASP1) of Bos taurus (Bovine).